The primary structure comprises 154 residues: PTS system glucose-specific EIIA component (154 aa).

A PTS EIIA type-1 domain is found at 26 to 130 (DEVFKERMLG…SIKSPIIFTN (105 aa)). Positions 63 and 78 each coordinate Zn(2+). His78 functions as the Tele-phosphohistidine intermediate; for EIIA activity in the catalytic mechanism. Phosphohistidine; by HPr is present on His78.

Heterodimer with glycerol kinase (glpk). It depends on Zn(2+) as a cofactor.

Its subcellular location is the cytoplasm. The phosphoenolpyruvate-dependent sugar phosphotransferase system (sugar PTS), a major carbohydrate active transport system, catalyzes the phosphorylation of incoming sugar substrates concomitantly with their translocation across the cell membrane. The enzyme II complex composed of PtsG and Crr is involved in glucose transport. The protein is PTS system glucose-specific EIIA component (crr) of Mycoplasma capricolum subsp. capricolum (strain California kid / ATCC 27343 / NCTC 10154).